The sequence spans 242 residues: Glutamate transport ATP-binding protein GluA (242 aa).

The region spanning Ile-2 to Leu-236 is the ABC transporter domain. Gly-34–Ser-41 is an ATP binding site.

This sequence belongs to the ABC transporter superfamily. As to quaternary structure, the complex is composed of two ATP-binding proteins (GluA), two transmembrane proteins (GluC and GluD) and a solute-binding protein (GluB).

The protein resides in the cell membrane. It catalyses the reaction a polar amino acid(out) + ATP + H2O = a polar amino acid(in) + ADP + phosphate + H(+). The catalysed reaction is L-glutamate(out) + ATP + H2O = L-glutamate(in) + ADP + phosphate + H(+). In terms of biological role, part of the ABC transporter complex GluABCD involved in glutamate uptake. Probably responsible for energy coupling to the transport system. The sequence is that of Glutamate transport ATP-binding protein GluA from Corynebacterium glutamicum (strain ATCC 13032 / DSM 20300 / JCM 1318 / BCRC 11384 / CCUG 27702 / LMG 3730 / NBRC 12168 / NCIMB 10025 / NRRL B-2784 / 534).